Consider the following 350-residue polypeptide: NADH-quinone oxidoreductase subunit H (350 aa).

The next 8 membrane-spanning stretches (helical) occupy residues 31–51 (LMLLAVVGVLAFLFLNALFLI), 102–122 (LLAPVLIFTIPVMLFLVIPFG), 132–152 (LGVLYLVAITSVETIVLWMAG), 171–191 (MLSYEMPVILAMLSVVMMAGS), 205–225 (WFIFLQPVGFLIYFIAVNAEF), 263–283 (FMIGAIMVTTLFLGGWNAPFG), 286–306 (FIPSWLWFIIKMYFVITLYMW), and 322–342 (FAWKFLLPVSLANIFITGFGL).

The protein belongs to the complex I subunit 1 family. NDH-1 is composed of 14 different subunits. Subunits NuoA, H, J, K, L, M, N constitute the membrane sector of the complex.

Its subcellular location is the cell membrane. It catalyses the reaction a quinone + NADH + 5 H(+)(in) = a quinol + NAD(+) + 4 H(+)(out). NDH-1 shuttles electrons from NADH, via FMN and iron-sulfur (Fe-S) centers, to quinones in the respiratory chain. The immediate electron acceptor for the enzyme in this species is believed to be ubiquinone. Couples the redox reaction to proton translocation (for every two electrons transferred, four hydrogen ions are translocated across the cytoplasmic membrane), and thus conserves the redox energy in a proton gradient. This subunit may bind ubiquinone. The polypeptide is NADH-quinone oxidoreductase subunit H (Carboxydothermus hydrogenoformans (strain ATCC BAA-161 / DSM 6008 / Z-2901)).